A 125-amino-acid chain; its full sequence is Cysteine proteinase inhibitor 3 (125 aa).

The signal sequence occupies residues 1-22; that stretch reads MESKTFWIVTLLLCGTIQLAIC. Positions 36-124 constitute a Cystatin domain; it reads GGVHDLRGNQ…KQLQEFKESS (89 aa). Positions 80-84 match the Secondary area of contact motif; the sequence is QVVAG.

This sequence belongs to the cystatin family. Phytocystatin subfamily.

Its subcellular location is the secreted. Its function is as follows. Specific inhibitor of cysteine proteinases. Probably involved in the regulation of endogenous processes and in defense against pests and pathogens. The polypeptide is Cysteine proteinase inhibitor 3 (CYS3) (Arabidopsis thaliana (Mouse-ear cress)).